We begin with the raw amino-acid sequence, 89 residues long: Small ribosomal subunit protein uS15 (89 aa).

Belongs to the universal ribosomal protein uS15 family. In terms of assembly, part of the 30S ribosomal subunit. Forms a bridge to the 50S subunit in the 70S ribosome, contacting the 23S rRNA.

Functionally, one of the primary rRNA binding proteins, it binds directly to 16S rRNA where it helps nucleate assembly of the platform of the 30S subunit by binding and bridging several RNA helices of the 16S rRNA. In terms of biological role, forms an intersubunit bridge (bridge B4) with the 23S rRNA of the 50S subunit in the ribosome. This Thiobacillus denitrificans (strain ATCC 25259 / T1) protein is Small ribosomal subunit protein uS15.